We begin with the raw amino-acid sequence, 583 residues long: Arginine--tRNA ligase (583 aa).

The 'HIGH' region motif lies at 123 to 133; it reads PNIAKEMHVGH.

The protein belongs to the class-I aminoacyl-tRNA synthetase family. Monomer.

It localises to the cytoplasm. The catalysed reaction is tRNA(Arg) + L-arginine + ATP = L-arginyl-tRNA(Arg) + AMP + diphosphate. This Blochmanniella floridana protein is Arginine--tRNA ligase.